Consider the following 246-residue polypeptide: 1-(5-phosphoribosyl)-5-[(5-phosphoribosylamino)methylideneamino] imidazole-4-carboxamide isomerase (246 aa).

Asp-8 acts as the Proton acceptor in catalysis. Asp-129 functions as the Proton donor in the catalytic mechanism.

It belongs to the HisA/HisF family.

Its subcellular location is the cytoplasm. It catalyses the reaction 1-(5-phospho-beta-D-ribosyl)-5-[(5-phospho-beta-D-ribosylamino)methylideneamino]imidazole-4-carboxamide = 5-[(5-phospho-1-deoxy-D-ribulos-1-ylimino)methylamino]-1-(5-phospho-beta-D-ribosyl)imidazole-4-carboxamide. It participates in amino-acid biosynthesis; L-histidine biosynthesis; L-histidine from 5-phospho-alpha-D-ribose 1-diphosphate: step 4/9. The protein is 1-(5-phosphoribosyl)-5-[(5-phosphoribosylamino)methylideneamino] imidazole-4-carboxamide isomerase of Desulforamulus reducens (strain ATCC BAA-1160 / DSM 100696 / MI-1) (Desulfotomaculum reducens).